A 107-amino-acid chain; its full sequence is Thioredoxin-1 (107 aa).

Residues 2–106 form the Thioredoxin domain; it reads ASVRTMTDFH…LTNMMAKLVK (105 aa). Catalysis depends on nucleophile residues cysteine 31 and cysteine 34. Cysteines 31 and 34 form a disulfide.

It belongs to the thioredoxin family.

It localises to the nucleus. Its function is as follows. Participates in various redox reactions through the reversible oxidation of its active center dithiol to a disulfide and catalyzes dithiol-disulfide exchange reactions. As a reducing substrate of peroxiredoxin 1, thioredoxin 2 is preferred over thioredoxin 1. Required for female meiosis and early embryonic development. In Drosophila yakuba (Fruit fly), this protein is Thioredoxin-1 (dhd).